A 99-amino-acid polypeptide reads, in one-letter code: Large ribosomal subunit protein P1 (99 aa).

In terms of assembly, part of the 50S ribosomal subunit. Homodimer, it forms part of the ribosomal stalk which helps the ribosome interact with GTP-bound translation factors. Forms both a pentameric uL10/P0(P1)2(P1)2 and heptameric uL10/P0(P1)2(P1)2(P1)2 complex, where uL10/P0 forms an elongated spine to which the P1 dimers bind in a sequential fashion. The proportion of heptameric complexes increases during cell growth.

In terms of biological role, forms part of the ribosomal stalk, playing a central role in the interaction of the ribosome with GTP-bound translation factors. The polypeptide is Large ribosomal subunit protein P1 (Methanococcus vannielii).